A 261-amino-acid chain; its full sequence is VPGGLXPPPEYVGPKLVNDADHPWEPLRPGDIRGPCPGLNTLASHGYLPRNGVATPAQIINAIVEGFNFNYEGAVFVTYFAHIVDGNLVTDLLSIGGKTNLTGEDTGAPAIIGGLNTHSVFEGDASMTRDDFHFGDNHSFNQTLFDQFVEYSNTYGGGFYNQEVAGHLRRRRIEQSIATNPEFDFTSPRFFTAFAESSFPYSFFVDGRITERPGGLSMENATLFFRDHKMPDDFWRNVNGEMTFTGTPDPNSAPSNLALGH.

Heme is bound at residue Cys36. Residues Asn100, Asn137, Asn141, and Asn220 are each glycosylated (N-linked (GlcNAc...) asparagine).

The protein belongs to the chloroperoxidase family. Heme b serves as cofactor. Post-translationally, N-glycosylated.

Functionally, aromatic peroxidase that oxidizes aryl alcohols into the corresponding aldehydes and then into the corresponding benzoic acids. Catalyzes the regioselective peroxide-dependent hydroxylation of naphthalene to 1-naphthol and to a far lesser extent 2-naphthol via a naphthalene 1,2-oxide intermediate. Halogenates phenol to 2-bromophenol and 4-bromophenol. Oxidizes the sulfur-containing heterocycle dibenzothiophene to yield sulfoxidation products, and trace amounts of ring-hydroxylation products. The polypeptide is Aromatic peroxygenase (Coprinellus radians (Coprophilous mushroom)).